The primary structure comprises 545 residues: Glucose-6-phosphate isomerase (545 aa).

Glu351 (proton donor) is an active-site residue. Active-site residues include His382 and Lys510.

Belongs to the GPI family.

The protein localises to the cytoplasm. It carries out the reaction alpha-D-glucose 6-phosphate = beta-D-fructose 6-phosphate. It participates in carbohydrate biosynthesis; gluconeogenesis. It functions in the pathway carbohydrate degradation; glycolysis; D-glyceraldehyde 3-phosphate and glycerone phosphate from D-glucose: step 2/4. Its function is as follows. Catalyzes the reversible isomerization of glucose-6-phosphate to fructose-6-phosphate. In Shewanella oneidensis (strain ATCC 700550 / JCM 31522 / CIP 106686 / LMG 19005 / NCIMB 14063 / MR-1), this protein is Glucose-6-phosphate isomerase.